We begin with the raw amino-acid sequence, 146 residues long: Putative serine protease inhibitor SAV_2156 (146 aa).

Residues 1 to 26 (MTKTTMAVPGALLAAIALLSAAPAQA) form the signal peptide. 2 cysteine pairs are disulfide-bonded: cysteine 57–cysteine 70 and cysteine 90–cysteine 120.

The protein belongs to the protease inhibitor I16 (SSI) family.

It localises to the secreted. This Streptomyces avermitilis (strain ATCC 31267 / DSM 46492 / JCM 5070 / NBRC 14893 / NCIMB 12804 / NRRL 8165 / MA-4680) protein is Putative serine protease inhibitor SAV_2156.